A 341-amino-acid chain; its full sequence is Tetraacyldisaccharide 4'-kinase (341 aa).

54-61 (TVGGAGKT) serves as a coordination point for ATP.

The protein belongs to the LpxK family.

The catalysed reaction is a lipid A disaccharide + ATP = a lipid IVA + ADP + H(+). It functions in the pathway glycolipid biosynthesis; lipid IV(A) biosynthesis; lipid IV(A) from (3R)-3-hydroxytetradecanoyl-[acyl-carrier-protein] and UDP-N-acetyl-alpha-D-glucosamine: step 6/6. Functionally, transfers the gamma-phosphate of ATP to the 4'-position of a tetraacyldisaccharide 1-phosphate intermediate (termed DS-1-P) to form tetraacyldisaccharide 1,4'-bis-phosphate (lipid IVA). This is Tetraacyldisaccharide 4'-kinase from Brucella melitensis biotype 2 (strain ATCC 23457).